The following is a 395-amino-acid chain: S-adenosylmethionine synthase (395 aa).

Position 16 (His-16) interacts with ATP. Mg(2+) is bound at residue Asp-18. Position 44 (Glu-44) interacts with K(+). Residues Glu-57 and Gln-100 each coordinate L-methionine. The tract at residues 100-110 is flexible loop; that stretch reads QSPDIAQGVDD. Residues 174 to 176, 241 to 242, Asp-250, 256 to 257, Ala-273, and Lys-277 contribute to the ATP site; these read DAK, RF, and RK. Asp-250 lines the L-methionine pocket. Lys-281 contacts L-methionine.

It belongs to the AdoMet synthase family. In terms of assembly, homotetramer; dimer of dimers. The cofactor is Mg(2+). K(+) serves as cofactor.

It is found in the cytoplasm. The catalysed reaction is L-methionine + ATP + H2O = S-adenosyl-L-methionine + phosphate + diphosphate. The protein operates within amino-acid biosynthesis; S-adenosyl-L-methionine biosynthesis; S-adenosyl-L-methionine from L-methionine: step 1/1. Its function is as follows. Catalyzes the formation of S-adenosylmethionine (AdoMet) from methionine and ATP. The overall synthetic reaction is composed of two sequential steps, AdoMet formation and the subsequent tripolyphosphate hydrolysis which occurs prior to release of AdoMet from the enzyme. The sequence is that of S-adenosylmethionine synthase from Limosilactobacillus reuteri (strain DSM 20016) (Lactobacillus reuteri).